The chain runs to 168 residues: Phosphopantetheine adenylyltransferase (168 aa).

Position 9 (threonine 9) interacts with substrate. ATP contacts are provided by residues 9–10 (TF) and histidine 17. Substrate-binding residues include lysine 41, leucine 73, and arginine 87. ATP contacts are provided by residues 88-90 (GLR), glutamate 98, and 123-129 (YQFISGT).

Belongs to the bacterial CoaD family. As to quaternary structure, homohexamer. Mg(2+) serves as cofactor.

It localises to the cytoplasm. The enzyme catalyses (R)-4'-phosphopantetheine + ATP + H(+) = 3'-dephospho-CoA + diphosphate. It functions in the pathway cofactor biosynthesis; coenzyme A biosynthesis; CoA from (R)-pantothenate: step 4/5. Reversibly transfers an adenylyl group from ATP to 4'-phosphopantetheine, yielding dephospho-CoA (dPCoA) and pyrophosphate. The chain is Phosphopantetheine adenylyltransferase from Ralstonia nicotianae (strain ATCC BAA-1114 / GMI1000) (Ralstonia solanacearum).